We begin with the raw amino-acid sequence, 174 residues long: Protein FanG (174 aa).

Positions 1 to 21 are cleaved as a signal peptide; it reads MKKLYKAITVICILMSNLQSA. A disulfide bridge links cysteine 41 with cysteine 75.

The protein localises to the fimbrium. Its function is as follows. Involved in the biosynthesis of K99 fimbriae. The chain is Protein FanG (fanG) from Escherichia coli.